Here is a 363-residue protein sequence, read N- to C-terminus: tRNA(Met) cytidine acetate ligase (363 aa).

Residues 7–20 (IAEF…HKYL), Gly96, Asn152, and Arg175 contribute to the ATP site.

It belongs to the TmcAL family.

The protein localises to the cytoplasm. The enzyme catalyses cytidine(34) in elongator tRNA(Met) + acetate + ATP = N(4)-acetylcytidine(34) in elongator tRNA(Met) + AMP + diphosphate. Catalyzes the formation of N(4)-acetylcytidine (ac(4)C) at the wobble position of elongator tRNA(Met), using acetate and ATP as substrates. First activates an acetate ion to form acetyladenylate (Ac-AMP) and then transfers the acetyl group to tRNA to form ac(4)C34. This Streptococcus thermophilus (strain ATCC BAA-250 / LMG 18311) protein is tRNA(Met) cytidine acetate ligase.